A 145-amino-acid chain; its full sequence is Large ribosomal subunit protein uL13 (145 aa).

Belongs to the universal ribosomal protein uL13 family. As to quaternary structure, part of the 50S ribosomal subunit. Interacts weakly with proteins L3 and L6.

In terms of biological role, this protein is one of the early assembly proteins of the 50S ribosomal subunit. Binds to 23S rRNA. This is Large ribosomal subunit protein uL13 from Haloarcula marismortui (strain ATCC 43049 / DSM 3752 / JCM 8966 / VKM B-1809) (Halobacterium marismortui).